The primary structure comprises 945 residues: Glutamyl aminopeptidase (945 aa).

The Cytoplasmic portion of the chain corresponds to 1–18 (MNFAEEEPSKKYCIKGKH). Residues 19–39 (VAIICATVVAVGLIVGLSVGL) traverse the membrane as a helical; Signal-anchor for type II membrane protein segment. At 40–945 (TRSCEPGTTP…SISEWFTSMP (906 aa)) the chain is on the extracellular side. Residues 45-77 (PGTTPAPSNPPPHTSTALPPQDQNVCPDSDDES) form a disordered region. N-linked (GlcNAc...) asparagine glycosylation is found at Asn116 and Asn189. Position 215 (Glu215) interacts with substrate. Residues Asn236 and Asn316 are each glycosylated (N-linked (GlcNAc...) asparagine). Substrate is bound at residue 349 to 353 (GAMEN). Residue His385 coordinates Zn(2+). Glu386 functions as the Proton acceptor in the catalytic mechanism. The Zn(2+) site is built by His389 and Glu408. Asn546, Asn584, Asn601, Asn640, Asn669, Asn754, Asn766, and Asn792 each carry an N-linked (GlcNAc...) asparagine glycan. Substrate is bound at residue Arg878.

It belongs to the peptidase M1 family. As to quaternary structure, homodimer; disulfide-linked. Zn(2+) serves as cofactor. In terms of tissue distribution, highest expression in kidney proximal tubules and ileum enterocytes. High expression also detected in liver and pituitary. Lower levels in heart, adrenal gland and brain. Not detected in aorta, lung or spleen. In heart, higher levels in ventricle than in atrium. Also expressed in glomerular mesangial cells.

It localises to the cell membrane. It carries out the reaction Release of N-terminal glutamate (and to a lesser extent aspartate) from a peptide.. Its activity is regulated as follows. Substrate specificity is modulated by calcium which enhances the enzymatic activity for cleavage of acidic residues while reducing its activity with basic residues. Inhibited by aminopeptidase inhibitors amastatin and bestatin. Regulates central hypertension through its calcium-modulated preference to cleave N-terminal acidic residues from peptides such as angiotensin II. This chain is Glutamyl aminopeptidase (Enpep), found in Rattus norvegicus (Rat).